The following is a 128-amino-acid chain: Large ribosomal subunit protein bL17 (128 aa).

It belongs to the bacterial ribosomal protein bL17 family. As to quaternary structure, part of the 50S ribosomal subunit. Contacts protein L32.

This chain is Large ribosomal subunit protein bL17, found in Glaesserella parasuis serovar 5 (strain SH0165) (Haemophilus parasuis).